A 331-amino-acid polypeptide reads, in one-letter code: Adenosine deaminase (331 aa).

Zn(2+)-binding residues include histidine 12 and histidine 14. 3 residues coordinate substrate: histidine 14, aspartate 16, and glycine 170. Residue histidine 197 coordinates Zn(2+). Residue glutamate 200 is the Proton donor of the active site. Position 278 (aspartate 278) interacts with Zn(2+).

Belongs to the metallo-dependent hydrolases superfamily. Adenosine and AMP deaminases family. Adenosine deaminase subfamily. It depends on Zn(2+) as a cofactor.

The catalysed reaction is adenosine + H2O + H(+) = inosine + NH4(+). The enzyme catalyses 2'-deoxyadenosine + H2O + H(+) = 2'-deoxyinosine + NH4(+). In terms of biological role, catalyzes the hydrolytic deamination of adenosine and 2-deoxyadenosine. This is Adenosine deaminase from Vibrio vulnificus (strain YJ016).